A 484-amino-acid polypeptide reads, in one-letter code: Notoamide biosynthesis transcriptional activator notL (484 aa).

A DNA-binding region (zn(2)-C6 fungal-type) is located at residues 33–60 (CQSCATSKIKCPKEKTSCSKCQARGIEC). Disordered regions lie at residues 70 to 154 (RRRE…NNSV) and 363 to 387 (GGGE…QMRP). Residues 76–122 (TGHPTSCTSTSTTANSSSSSSRSSNSSSSSSTSPPSSSSSLSSNPEP) are compositionally biased toward low complexity. Basic and acidic residues predominate over residues 123-133 (TSDKDLPRPRS). Polar residues-rich tracts occupy residues 139 to 154 (ANST…NNSV) and 368 to 378 (DTGQRPATSMI).

Its subcellular location is the nucleus. Its function is as follows. Transcription factor that probably regulates the expression of the gene cluster that mediates the biosynthesis of notoamide, a fungal indole alkaloid that belongs to a family of natural products containing a characteristic bicyclo[2.2.2]diazaoctane core. The protein is Notoamide biosynthesis transcriptional activator notL of Aspergillus sp. (strain MF297-2).